The sequence spans 322 residues: SUMO-activating enzyme subunit 1A (322 aa).

Met1 bears the N-acetylmethionine mark.

The protein belongs to the ubiquitin-activating E1 family. Heterodimer of SAE1A or SAE1B and SAE2. The complex binds SUMO proteins via SAE2.

It is found in the nucleus. Its pathway is protein modification; protein sumoylation. Functionally, the dimeric enzyme acts as an E1 ligase for SUMO1 and SUMO2. It mediates ATP-dependent activation of SUMO proteins and formation of a thioester with a conserved cysteine residue on SAE2. Functionally redundant with its paralog SAE1B. The protein is SUMO-activating enzyme subunit 1A (SAE1A) of Arabidopsis thaliana (Mouse-ear cress).